Reading from the N-terminus, the 377-residue chain is NADH dehydrogenase [ubiquinone] 1 alpha subcomplex subunit 9, mitochondrial (377 aa).

Residues Met-1 to Gln-35 constitute a mitochondrion transit peptide. Lys-175 is modified (N6-succinyllysine). N6-acetyllysine is present on residues Lys-189 and Lys-370.

This sequence belongs to the complex I NDUFA9 subunit family. In terms of assembly, complex I is composed of 45 different subunits. This a component of the hydrophobic protein fraction. Interacts with BLOC1S1. Interacts with SLC2A4. Interacts with CLOCK. Interacts with RAB5IF. It depends on FAD as a cofactor. Post-translationally, acetylated on lysine residues. BLOC1S1 is required for acetylation. Acetylated by CLOCK in a circadian manner. In terms of tissue distribution, expressed by the principal cells of the epididymis. Detected in flagella of epididymal sperm (at protein level).

The protein resides in the mitochondrion matrix. In terms of biological role, accessory subunit of the mitochondrial membrane respiratory chain NADH dehydrogenase (Complex I), that is believed not to be involved in catalysis. Complex I functions in the transfer of electrons from NADH to the respiratory chain. The immediate electron acceptor for the enzyme is believed to be ubiquinone. This Rattus norvegicus (Rat) protein is NADH dehydrogenase [ubiquinone] 1 alpha subcomplex subunit 9, mitochondrial.